The chain runs to 1400 residues: MNQEVMNLFNPQAPAQTFDSIRISIASPEKILSWSYGEIKKPETINYRTFKPERDGLFCARIFGPIKDYECLCGKYKRMKYKGIICEKCGVEVTLSRVRRERMGHIELAAPVAHIWFLKSLPSRIGTLLDMTLKDIERVLYFENYIVTEPGLTSLKEHQLLSEEEYMIAVDEFGEDQFTALIGAEAIYELLASMELEKIAADLRVDLAETTSDLKQKKLMKRLKIVENFLESGNRPEWMIMKIVPVIPPDLRPLVPLDGGRFATSDLNDLYRRVINRNNRLKRLIELRAPGIIIRNEKRMLQEAVDALFDNGRRGRVITGANKRPLKSLSDMLKGKQGRFRQNLLGKRVDYSGRSVIVTGPELKLHQCGLPKKMALELFKPFIYARLDAKGYSSTVKQAKKLVEKERPEVWDILDEVIREHPVLLNRAPTLHRLGIQAFEPTLIEGKAIQLHPLVCTAFNADFDGDQMAVHVPLSLEAQLEARVLMMSTNNILHPANGAPIIVPSQDMVLGLYYLSIVAEKEPGEGMIFADMGELQHALENKVVTLHTKIKGRFKTVDAEGNPVSKIYDTTPGRMIMGELLPKNVNVPFDICNQEMTKKNISKMIDHVYRHCGQKETVIFCDRIMQLGFAHACRAGISFGKDDMVIPESKAKIVAETEALTTEYEQQYNDGLITQGEKYNKVVDAWGKATDKITEEMMARLKAVEFDPVTGRQKQMNSVYMMSHSGARGSVNQMRQLGGMRGLMAKPSGEIIETPIISNFKEGLTVNEYFNSTHGARKGLADTALKTANSGYLTRRLVDVAQDAIISEVDCGAEIGLTMQPIVDAGQIVASIGQRVLGRTALDPILHPVTGEVIVEAGRMVEEKDVEIIEKAGIQSIRIRSALTCETRNGVCAKCYGRDLARGTPVNQGEAVGVIAAQSIGEPGTQLTMRTFHLGGTAQVVDSSYLEASYEGTVKLRNRNVVRNSDGNLVVMGRNMAVLILDATGKERAVHRVTYGSRLFVDEGDTVKRGQRIAEWDPYTRPIMTEVEGYVEFEDLVDGLSVSETADESTGITKRVVIDWRSTPRGSDLKPAMVIKDKAGKILKLSKGGDARFLLSVESILSVEPGAHVKAGDVIARLPMESAKTKDITGGLPRVAELFEARRPKDHAIIAEIDGTVRFGRDYKNKRRIIIEPNDDTIEPVEYLIPKGKPFHLQDGDVIEKGEYILDGNPAPHDILAIKGVEALASYLVNEIQEVYRLQGVLINDKHIEVIVRQMLQKVEITESGDTGYIPGDHVDRIELEEINERLIEEGKKPGSGNPVLLGITKASLQTPSFISAASFQETTRVLTEAAVAGKMDTLQGLKENVIVGRLIPAGTGGMTNQIRRIATARDELIIDERRKTSGSAEANAMLVDMTNNAAE.

Residues Cys71, Cys73, Cys86, and Cys89 each coordinate Zn(2+). Asp462, Asp464, and Asp466 together coordinate Mg(2+). Zn(2+) is bound by residues Cys811, Cys885, Cys892, and Cys895.

It belongs to the RNA polymerase beta' chain family. In terms of assembly, the RNAP catalytic core consists of 2 alpha, 1 beta, 1 beta' and 1 omega subunit. When a sigma factor is associated with the core the holoenzyme is formed, which can initiate transcription. Requires Mg(2+) as cofactor. It depends on Zn(2+) as a cofactor.

The enzyme catalyses RNA(n) + a ribonucleoside 5'-triphosphate = RNA(n+1) + diphosphate. Functionally, DNA-dependent RNA polymerase catalyzes the transcription of DNA into RNA using the four ribonucleoside triphosphates as substrates. The chain is DNA-directed RNA polymerase subunit beta' from Brucella melitensis biotype 1 (strain ATCC 23456 / CCUG 17765 / NCTC 10094 / 16M).